An 853-amino-acid polypeptide reads, in one-letter code: DNA mismatch repair protein MutS (853 aa).

Residue 613–620 (GPNMGGKS) coordinates ATP.

Belongs to the DNA mismatch repair MutS family.

In terms of biological role, this protein is involved in the repair of mismatches in DNA. It is possible that it carries out the mismatch recognition step. This protein has a weak ATPase activity. The sequence is that of DNA mismatch repair protein MutS from Vibrio vulnificus (strain YJ016).